Here is an 81-residue protein sequence, read N- to C-terminus: Acyl carrier protein (81 aa).

The Carrier domain maps to 2–77 (ASVEEKVKQI…DAVDYITAHA (76 aa)). Ser-37 carries the post-translational modification O-(pantetheine 4'-phosphoryl)serine.

This sequence belongs to the acyl carrier protein (ACP) family. 4'-phosphopantetheine is transferred from CoA to a specific serine of apo-ACP by AcpS. This modification is essential for activity because fatty acids are bound in thioester linkage to the sulfhydryl of the prosthetic group.

Its subcellular location is the cytoplasm. The protein operates within lipid metabolism; fatty acid biosynthesis. Its function is as follows. Carrier of the growing fatty acid chain in fatty acid biosynthesis. This Koribacter versatilis (strain Ellin345) protein is Acyl carrier protein.